The chain runs to 344 residues: UDP-N-acetylenolpyruvoylglucosamine reductase (344 aa).

Residues 15 to 185 (LPACANQIIE…ISVGLKLAKA (171 aa)) enclose the FAD-binding PCMH-type domain. The active site involves Arg161. Residue Ser231 is the Proton donor of the active site. Residue Glu327 is part of the active site.

It belongs to the MurB family. The cofactor is FAD.

The protein resides in the cytoplasm. The enzyme catalyses UDP-N-acetyl-alpha-D-muramate + NADP(+) = UDP-N-acetyl-3-O-(1-carboxyvinyl)-alpha-D-glucosamine + NADPH + H(+). It functions in the pathway cell wall biogenesis; peptidoglycan biosynthesis. Cell wall formation. In Haemophilus ducreyi (strain 35000HP / ATCC 700724), this protein is UDP-N-acetylenolpyruvoylglucosamine reductase.